A 61-amino-acid chain; its full sequence is Photosystem II reaction center protein Z (61 aa).

Transmembrane regions (helical) follow at residues 5–25 (LTAL…VALA) and 38–58 (NKAF…DGIS).

This sequence belongs to the PsbZ family. PSII is composed of 1 copy each of membrane proteins PsbA, PsbB, PsbC, PsbD, PsbE, PsbF, PsbH, PsbI, PsbJ, PsbK, PsbL, PsbM, PsbT, PsbX, PsbY, PsbZ, Psb30/Ycf12, at least 3 peripheral proteins of the oxygen-evolving complex and a large number of cofactors. It forms dimeric complexes.

Its subcellular location is the plastid. It localises to the chloroplast thylakoid membrane. Functionally, may control the interaction of photosystem II (PSII) cores with the light-harvesting antenna, regulates electron flow through the 2 photosystem reaction centers. PSII is a light-driven water plastoquinone oxidoreductase, using light energy to abstract electrons from H(2)O, generating a proton gradient subsequently used for ATP formation. The polypeptide is Photosystem II reaction center protein Z (Skeletonema costatum (Marine centric diatom)).